Here is a 769-residue protein sequence, read N- to C-terminus: Serine protease HtrA-like (769 aa).

A compositionally biased stretch (basic residues) spans 1 to 20 (MDIGKKHVIPKSQYRRKRRE). A disordered region spans residues 1–390 (MDIGKKHVIP…ATSKLNKGRA (390 aa)). 2 stretches are compositionally biased toward basic and acidic residues: residues 21-64 (FFHN…ERFK) and 71-108 (LEQR…DVSK). Positions 126–137 (YEQNSEATLSTK) are enriched in polar residues. Over residues 138-186 (STDKVESTEMRKLSSDKNKVGHEEQHVLSKPSEHDKETRIDSESSRTDS) the composition is skewed to basic and acidic residues. A compositionally biased stretch (polar residues) spans 247–262 (QQSQNEQTKTYTYGDS). Composition is skewed to basic and acidic residues over residues 264–296 (QNDK…HIVD) and 310–330 (KTDD…HKQN). The span at 331–347 (ADSSETVGYQSQSTASH) shows a compositional bias: polar residues. The span at 348-364 (RSTEKRNISINDHDKLN) shows a compositional bias: basic and acidic residues. Polar residues predominate over residues 365 to 390 (GQKTNTKTSANNNQKKATSKLNKGRA). Residues 410–430 (LVILMGIIILIVILNAIFNNV) traverse the membrane as a helical segment. Active-site charge relay system residues include H504, D534, and S619. The region spanning 680–733 (IASLNSFERQAVKLPGKVKNGVVVDQVDNNGLADQSGLKKGDVITELDGKLLED) is the PDZ domain.

It belongs to the peptidase S1C family.

It localises to the cell membrane. The protein is Serine protease HtrA-like of Staphylococcus aureus (strain COL).